The primary structure comprises 1881 residues: Nuclear pore membrane glycoprotein 210-like (1881 aa).

The N-terminal stretch at 1-32 is a signal peptide; it reads MIAFGAPRRRSFGLLFSLAPHLFFLFLIGTLA. 3 N-linked (GlcNAc...) asparagine glycosylation sites follow: N80, N344, and N808. The 73-residue stretch at 1078–1150 folds into the BIG2 domain; it reads FPPFRLIPEK…TIQTVNEDTG (73 aa). An N-linked (GlcNAc...) asparagine glycan is attached at N1441. The chain crosses the membrane as a helical span at residues 1804 to 1824; it reads YQILLFTLFAVLASTSFIFLA.

The protein belongs to the NUP210 family. Expressed in testis.

It is found in the nucleus membrane. The protein resides in the nucleus. The protein localises to the nucleoplasm. The sequence is that of Nuclear pore membrane glycoprotein 210-like (Nup210l) from Mus musculus (Mouse).